The primary structure comprises 83 residues: Putative membrane protein insertion efficiency factor (83 aa).

Positions 64–83 (GGFDPVPLKKDKNSKTTHHH) are disordered.

The protein belongs to the UPF0161 family.

The protein resides in the cell membrane. Its function is as follows. Could be involved in insertion of integral membrane proteins into the membrane. This Staphylococcus epidermidis (strain ATCC 12228 / FDA PCI 1200) protein is Putative membrane protein insertion efficiency factor.